The following is a 65-amino-acid chain: Lantipeptide Flvbeta.h (65 aa).

Residues 1 to 27 constitute a propeptide, cleaved by FlvT; sequence MERYGHLAGVIPVDEIDDMFESNVIGG. A 2,3-didehydrobutyrine; by FlvM2 modification is found at threonine 28. A cross-link (lanthionine (Ser-Cys); by FlvM2) is located at residues 29–33; it reads SSIDC. Serine 30 is modified (2,3-didehydroalanine (Ser); by FlvM2). At threonine 44 the chain carries 2,3-didehydrobutyrine; by FlvM2. Positions 48 to 54 form a cross-link, beta-methyllanthionine (Thr-Cys); by FlvM2; the sequence is TVRIEFC. Residues 56–59 constitute a cross-link (lanthionine (Ser-Cys); by FlvM2); the sequence is SAAC. A cross-link (beta-methyllanthionine (Thr-Cys); by FlvM2) is located at residues 60-63; the sequence is TYSC.

Post-translationally, contains LL-lanthionine, DL-lanthionine, and DL-beta-methyllanthionine, when coepressed in E.coli with the flavecin synthetase FlvM2.

The protein localises to the secreted. Lanthionine-containing peptide that does probably not show antibacterial activity, since its analog [+2]Flvbeta.h does not show antibacterial activity against M.luteus. Also does not show antibiotic activity when tested with [Del2]Flvalpha.a, an analog of Flvalpha.a, which is encoded by the same operon than Flvbeta.h. The bactericidal activity of lantibiotics is based on depolarization of energized bacterial cytoplasmic membranes, initiated by the formation of aqueous transmembrane pores. This is Lantipeptide Flvbeta.h from Ruminococcus flavefaciens.